A 155-amino-acid polypeptide reads, in one-letter code: Cytochrome P450 (155 aa).

Cys-99 is a binding site for heme.

This sequence belongs to the cytochrome P450 family. Requires heme as cofactor.

The sequence is that of Cytochrome P450 from Helianthus annuus (Common sunflower).